The chain runs to 255 residues: 5'-nucleotidase SurE (255 aa).

A divalent metal cation is bound by residues aspartate 8, aspartate 9, serine 39, and asparagine 91.

This sequence belongs to the SurE nucleotidase family. It depends on a divalent metal cation as a cofactor.

The protein localises to the cytoplasm. It carries out the reaction a ribonucleoside 5'-phosphate + H2O = a ribonucleoside + phosphate. Its function is as follows. Nucleotidase that shows phosphatase activity on nucleoside 5'-monophosphates. The protein is 5'-nucleotidase SurE of Acinetobacter baumannii (strain AB0057).